The following is a 145-amino-acid chain: Large ribosomal subunit protein mL59 (145 aa).

Over residues 123-135 (LKKTSKFKNERQK) the composition is skewed to basic and acidic residues. The tract at residues 123 to 145 (LKKTSKFKNERQKASKIAKPSPF) is disordered.

It belongs to the mitochondrion-specific ribosomal protein mL59 family. As to quaternary structure, component of the mitochondrial large ribosomal subunit (mt-LSU). Mature yeast 74S mitochondrial ribosomes consist of a small (37S) and a large (54S) subunit. The 37S small subunit contains a 15S ribosomal RNA (15S mt-rRNA) and at least 32 different proteins. The 54S large subunit contains a 21S rRNA (21S mt-rRNA) and at least 45 different proteins.

The protein resides in the mitochondrion. In terms of biological role, component of the mitochondrial ribosome (mitoribosome), a dedicated translation machinery responsible for the synthesis of mitochondrial genome-encoded proteins, including at least some of the essential transmembrane subunits of the mitochondrial respiratory chain. The mitoribosomes are attached to the mitochondrial inner membrane and translation products are cotranslationally integrated into the membrane. This is Large ribosomal subunit protein mL59 (mrpl25) from Schizosaccharomyces pombe (strain 972 / ATCC 24843) (Fission yeast).